Reading from the N-terminus, the 290-residue chain is 1D-myo-inositol 2-acetamido-2-deoxy-alpha-D-glucopyranoside deacetylase (290 aa).

Zn(2+) is bound by residues His17, Asp20, and His150.

It belongs to the MshB deacetylase family. Zn(2+) serves as cofactor.

The enzyme catalyses 1D-myo-inositol 2-acetamido-2-deoxy-alpha-D-glucopyranoside + H2O = 1D-myo-inositol 2-amino-2-deoxy-alpha-D-glucopyranoside + acetate. In terms of biological role, catalyzes the deacetylation of 1D-myo-inositol 2-acetamido-2-deoxy-alpha-D-glucopyranoside (GlcNAc-Ins) in the mycothiol biosynthesis pathway. This chain is 1D-myo-inositol 2-acetamido-2-deoxy-alpha-D-glucopyranoside deacetylase, found in Corynebacterium glutamicum (strain R).